The following is a 131-amino-acid chain: Small ribosomal subunit protein eS8 (131 aa).

Residues 15-36 are disordered; sequence PSGGKKGRVRKTKKKALGGGPP. Positions 17–30 are enriched in basic residues; sequence GGKKGRVRKTKKKA.

Belongs to the eukaryotic ribosomal protein eS8 family. In terms of assembly, part of the 30S ribosomal subunit.

The sequence is that of Small ribosomal subunit protein eS8 from Pyrobaculum calidifontis (strain DSM 21063 / JCM 11548 / VA1).